The primary structure comprises 298 residues: Protease HtpX homolog (298 aa).

2 helical membrane-spanning segments follow: residues 14-34 (VVLLVVFFALLALIGASAGYL) and 39-59 (YAMGLVLALVIGMIYATSMIF). Residue H143 coordinates Zn(2+). E144 is a catalytic residue. H147 is a Zn(2+) binding site. The next 2 membrane-spanning stretches (helical) occupy residues 158–178 (IAVALASAVTVISSIGGRMLW) and 197–217 (IITLLLSLLSLLLAPLVASLI). Zn(2+) is bound at residue E226.

It belongs to the peptidase M48B family. Zn(2+) is required as a cofactor.

The protein localises to the cell membrane. This is Protease HtpX homolog from Streptococcus pyogenes serotype M49 (strain NZ131).